The sequence spans 236 residues: UPF0173 metal-dependent hydrolase Mnod_3315 (236 aa).

The protein belongs to the UPF0173 family.

The polypeptide is UPF0173 metal-dependent hydrolase Mnod_3315 (Methylobacterium nodulans (strain LMG 21967 / CNCM I-2342 / ORS 2060)).